Consider the following 301-residue polypeptide: Probable DNA-directed RNA polymerase III subunit rpc6 (301 aa).

Belongs to the eukaryotic RPC34/RPC39 RNA polymerase subunit family. As to quaternary structure, component of the RNA polymerase III (Pol III) complex consisting of 17 subunits. Interacts with TFIIB.

It localises to the nucleus. In terms of biological role, DNA-dependent RNA polymerase catalyzes the transcription of DNA into RNA using the four ribonucleoside triphosphates as substrates. Specific peripheric component of RNA polymerase III which synthesizes small RNAs, such as 5S rRNA and tRNAs. The chain is Probable DNA-directed RNA polymerase III subunit rpc6 (rpc6) from Schizosaccharomyces pombe (strain 972 / ATCC 24843) (Fission yeast).